We begin with the raw amino-acid sequence, 223 residues long: MSTSLTTCEWKKVFYEKMEVAKPADSWELIIDPTLKPNELGPGWKQYLEQHASGRFHCSWCWHTWQSANVVILFHMHLDRAQRVGSVRMRVFKQLCYQCGTSRLDESSMLEENIEGLVDNLITSLREQCYDEDGGQYRIHVASRPDSGLHRSEFCEACQEGIVHWKPSEKLLEEDAAYTDASKKKGQAGFISSFFSFRWCLFWGTLCLVIVYLQFFRGRSGFL.

Topologically, residues 1–193 are cytoplasmic; the sequence is MSTSLTTCEW…KKGQAGFISS (193 aa). The 3CxxC-type zinc finger occupies 52 to 161; the sequence is ASGRFHCSWC…SEFCEACQEG (110 aa). The helical transmembrane segment at 194 to 216 threads the bilayer; it reads FFSFRWCLFWGTLCLVIVYLQFF. The Extracellular segment spans residues 217-223; that stretch reads RGRSGFL.

The protein belongs to the TMEM7 family. As to quaternary structure, interacts with olfactory receptors. As to expression, predominantly expressed in olfactory and vomeronasal organs, in mature olfactory sensory neurons.

It localises to the cell membrane. Functionally, specifically promotes functional cell surface expression of olfactory receptors, but not of other GPCRs. This Mus musculus (Mouse) protein is Receptor-transporting protein 2 (Rtp2).